The primary structure comprises 263 residues: UPF0739 protein C1orf74 homolog (263 aa).

The protein belongs to the UPF0739 family.

The polypeptide is UPF0739 protein C1orf74 homolog (Bos taurus (Bovine)).